The following is a 285-amino-acid chain: Pantothenate synthetase (285 aa).

30-37 is a binding site for ATP; sequence MGFLHEGH. The active-site Proton donor is His-37. Residue Gln-61 participates in (R)-pantoate binding. Beta-alanine is bound at residue Gln-61. Position 148-151 (148-151) interacts with ATP; that stretch reads GKKD. (R)-pantoate is bound at residue Gln-154. Residues Val-177 and 185 to 188 each bind ATP; that span reads LSSR.

The protein belongs to the pantothenate synthetase family. In terms of assembly, homodimer.

The protein resides in the cytoplasm. The catalysed reaction is (R)-pantoate + beta-alanine + ATP = (R)-pantothenate + AMP + diphosphate + H(+). It functions in the pathway cofactor biosynthesis; (R)-pantothenate biosynthesis; (R)-pantothenate from (R)-pantoate and beta-alanine: step 1/1. Functionally, catalyzes the condensation of pantoate with beta-alanine in an ATP-dependent reaction via a pantoyl-adenylate intermediate. The sequence is that of Pantothenate synthetase from Leptospira interrogans serogroup Icterohaemorrhagiae serovar copenhageni (strain Fiocruz L1-130).